Here is a 477-residue protein sequence, read N- to C-terminus: Proline--tRNA ligase (477 aa).

Belongs to the class-II aminoacyl-tRNA synthetase family. ProS type 3 subfamily. Homodimer.

Its subcellular location is the cytoplasm. It carries out the reaction tRNA(Pro) + L-proline + ATP = L-prolyl-tRNA(Pro) + AMP + diphosphate. Functionally, catalyzes the attachment of proline to tRNA(Pro) in a two-step reaction: proline is first activated by ATP to form Pro-AMP and then transferred to the acceptor end of tRNA(Pro). The protein is Proline--tRNA ligase of Methanoculleus marisnigri (strain ATCC 35101 / DSM 1498 / JR1).